The sequence spans 80 residues: Defensin-like protein 1 (80 aa).

Positions 1–29 (MAKFASIIALLFAALVLFAAFEAPTMVEA) are cleaved as a signal peptide. Position 30 is a pyrrolidone carboxylic acid (Gln-30). Disulfide bonds link Cys-33–Cys-80, Cys-44–Cys-65, Cys-50–Cys-74, and Cys-54–Cys-76.

Belongs to the DEFL family. As to quaternary structure, forms oligomers in its native state.

Its subcellular location is the secreted. In terms of biological role, possesses antifungal activity sensitive to inorganic cations. The sequence is that of Defensin-like protein 1 (AFP1) from Raphanus sativus (Radish).